The following is a 276-amino-acid chain: O-methyltransferase cnsE (276 aa).

S-adenosyl-L-methionine contacts are provided by residues Gln-110, 133–134, and His-155; that span reads DA.

The protein belongs to the methyltransferase superfamily. Requires S-adenosyl-L-methionine as cofactor.

It participates in alkaloid biosynthesis. In terms of biological role, O-methyltransferase; part of the gene cluster that mediates the biosynthesis of communesins, a prominent class of indole alkaloids with great potential as pharmaceuticals. Communesins are biosynthesized by the coupling of tryptamine and aurantioclavine, two building blocks derived from L-tryptophan. The L-tryptophan decarboxylase cnsB converts L-tryptophan to tryptamine, whereas the tryptophan dimethylallyltransferase cnsF converts L-tryptophan to 4-dimethylallyl tryptophan which is further transformed to aurantioclavine by the aurantioclavine synthase cnsA, probably aided by the catalase cnsD. The cytochrome P450 monooxygenase cnsC catalyzes the heterodimeric coupling between the two different indole moieties, tryptamine and aurantioclavine, to construct vicinal quaternary stereocenters and yield the heptacyclic communesin scaffold. The O-methyltransferase cnsE then methylates the communesin scaffold to produce communesin K, the simplest characterized communesin that contains the heptacyclic core. The dioxygenase cnsJ converts communesin K into communesin I. Acylation to introduce the hexadienyl group at position N16 of communesin I by the acyltransferase cnsK leads to the production of communesin B. The hexadienyl group is produced by the highly reducing polyketide synthase cnsI, before being hydrolytically removed from cnsI by the serine hydrolase cnsH, converted into hexadienyl-CoA by the CoA ligase cnsG, and then transferred to communesin I by cnsK. Surprisingly, cnsK may also be a promiscuous acyltransferase that can tolerate a range of acyl groups, including acetyl-, propionyl-, and butyryl-CoA, which lead to communesins A, G and H respectively. The roles of the alpha-ketoglutarate-dependent dioxygenases cnsM and cnsP have still to be determined. In Penicillium expansum (Blue mold rot fungus), this protein is O-methyltransferase cnsE.